The primary structure comprises 547 residues: CTP synthase (547 aa).

Residues 1 to 265 (MARFIFITGG…DQAVLDAFGI (265 aa)) are amidoligase domain. A CTP-binding site is contributed by S13. S13 provides a ligand contact to UTP. Residues 14–19 (SLGKGL) and D71 each bind ATP. D71 and E139 together coordinate Mg(2+). CTP is bound by residues 146 to 148 (DIE), 186 to 191 (KTKPTQ), and K222. Residues 186–191 (KTKPTQ) and K222 each bind UTP. The Glutamine amidotransferase type-1 domain maps to 291–546 (KVAIVGKYTQ…VRAAKENSRL (256 aa)). Residue G353 participates in L-glutamine binding. The active-site Nucleophile; for glutamine hydrolysis is the C380. Residues 381 to 384 (LGMQ), E404, and R474 contribute to the L-glutamine site. Active-site residues include H519 and E521.

It belongs to the CTP synthase family. Homotetramer.

The enzyme catalyses UTP + L-glutamine + ATP + H2O = CTP + L-glutamate + ADP + phosphate + 2 H(+). The catalysed reaction is L-glutamine + H2O = L-glutamate + NH4(+). It carries out the reaction UTP + NH4(+) + ATP = CTP + ADP + phosphate + 2 H(+). It functions in the pathway pyrimidine metabolism; CTP biosynthesis via de novo pathway; CTP from UDP: step 2/2. Its activity is regulated as follows. Allosterically activated by GTP, when glutamine is the substrate; GTP has no effect on the reaction when ammonia is the substrate. The allosteric effector GTP functions by stabilizing the protein conformation that binds the tetrahedral intermediate(s) formed during glutamine hydrolysis. Inhibited by the product CTP, via allosteric rather than competitive inhibition. In terms of biological role, catalyzes the ATP-dependent amination of UTP to CTP with either L-glutamine or ammonia as the source of nitrogen. Regulates intracellular CTP levels through interactions with the four ribonucleotide triphosphates. This chain is CTP synthase, found in Jannaschia sp. (strain CCS1).